The chain runs to 158 residues: Large ribosomal subunit protein uL11 (158 aa).

The protein belongs to the universal ribosomal protein uL11 family. In terms of assembly, part of the ribosomal stalk of the 50S ribosomal subunit. Interacts with L10 and the large rRNA to form the base of the stalk. L10 forms an elongated spine to which L12 dimers bind in a sequential fashion forming a multimeric L10(L12)X complex.

Its function is as follows. Forms part of the ribosomal stalk which helps the ribosome interact with GTP-bound translation factors. This is Large ribosomal subunit protein uL11 from Methanosphaerula palustris (strain ATCC BAA-1556 / DSM 19958 / E1-9c).